We begin with the raw amino-acid sequence, 389 residues long: Dual-specificity RNA methyltransferase RlmN (389 aa).

Residue Glu94 is the Proton acceptor of the active site. Residues 134-367 enclose the Radical SAM core domain; the sequence is PRVRVTQCIS…CFVRRRRGDD (234 aa). Cys141 and Cys372 are oxidised to a cystine. Residues Cys148, Cys152, and Cys155 each contribute to the [4Fe-4S] cluster site. S-adenosyl-L-methionine is bound by residues 197–198, Ser229, 253–255, and Asn329; these read GE and SLH. Cys372 (S-methylcysteine intermediate) is an active-site residue.

The protein belongs to the radical SAM superfamily. RlmN family. [4Fe-4S] cluster serves as cofactor.

Its subcellular location is the cytoplasm. The catalysed reaction is adenosine(2503) in 23S rRNA + 2 reduced [2Fe-2S]-[ferredoxin] + 2 S-adenosyl-L-methionine = 2-methyladenosine(2503) in 23S rRNA + 5'-deoxyadenosine + L-methionine + 2 oxidized [2Fe-2S]-[ferredoxin] + S-adenosyl-L-homocysteine. It catalyses the reaction adenosine(37) in tRNA + 2 reduced [2Fe-2S]-[ferredoxin] + 2 S-adenosyl-L-methionine = 2-methyladenosine(37) in tRNA + 5'-deoxyadenosine + L-methionine + 2 oxidized [2Fe-2S]-[ferredoxin] + S-adenosyl-L-homocysteine. Its function is as follows. Specifically methylates position 2 of adenine 2503 in 23S rRNA and position 2 of adenine 37 in tRNAs. m2A2503 modification seems to play a crucial role in the proofreading step occurring at the peptidyl transferase center and thus would serve to optimize ribosomal fidelity. The polypeptide is Dual-specificity RNA methyltransferase RlmN (Sorangium cellulosum (strain So ce56) (Polyangium cellulosum (strain So ce56))).